A 367-amino-acid polypeptide reads, in one-letter code: Forkhead box protein I1-B (367 aa).

Disordered stretches follow at residues 1–21 (MNPV…HLPH) and 213–274 (DNGN…PPTV). Residues 128–222 (RPPYSYSALI…DNGNFRRKRK (95 aa)) constitute a DNA-binding region (fork-head). The span at 233-246 (AKRDEDHLNPKGKE) shows a compositional bias: basic and acidic residues. A compositionally biased stretch (polar residues) spans 252 to 274 (TPSSSPEVLSPTGHSKSPSPPTV).

Initially localized to the animal hemisphere (the presumptive ectoderm) of early-mid blastula embryos. Becomes restricted to head placodes, excluding the otic placodes, by the tailbud stages.

It is found in the nucleus. Its function is as follows. Transcription factor. Essential for ventral specification of the early cephalic (head) ectoderm during gastrulation, playing a role in the 'non-neural' versus 'neural' cell fate choice. Binds to DNA via the target sequence 5'-[AG]TAAA[CT]A-3', with 5'-ATAAACA-3' being the preferred binding site. In Xenopus laevis (African clawed frog), this protein is Forkhead box protein I1-B (foxi1-b).